Consider the following 119-residue polypeptide: uncharacterized protein (119 aa).

This is an uncharacterized protein from Escherichia coli (strain K12).